The chain runs to 519 residues: Spermatocyte protein spe-8 (519 aa).

2 disordered regions span residues 1 to 39 (MSGV…NPNV) and 73 to 97 (NNLK…KQRD). A compositionally biased stretch (polar residues) spans 73 to 84 (NNLKKSASFDSK). Residues 85–97 (NQPEDSKTPKQRD) show a composition bias toward basic and acidic residues. The region spanning 119–208 (FYHGFMGRTE…PFYDNMTLIC (90 aa)) is the SH2 domain. ATP is bound by residues 146 to 154 (VGRRVAYVI) and Lys-184. One can recognise a Protein kinase domain in the interval 209–490 (GLARHEWQLN…KEEAGMHELD (282 aa)). Catalysis depends on Asp-349, which acts as the Proton acceptor.

The protein belongs to the protein kinase superfamily. Tyr protein kinase family. Fes/fps subfamily. Expressed in hermaphrodite larvae but not in adult. Expressed in both male larvae and adult.

It localises to the cell membrane. The protein localises to the cytoplasm. The catalysed reaction is L-tyrosyl-[protein] + ATP = O-phospho-L-tyrosyl-[protein] + ADP + H(+). Probable non-receptor tyrosine-protein kinase which plays a role in spermatid activation (spermiogenesis) in hermaphrodites. The sequence is that of Spermatocyte protein spe-8 from Caenorhabditis briggsae.